The chain runs to 70 residues: Conotoxin Lt11.2 (70 aa).

The N-terminal stretch at methionine 1 to alanine 26 is a signal peptide. Intrachain disulfides connect cysteine 27–cysteine 41, cysteine 34–cysteine 46, cysteine 40–cysteine 50, and cysteine 45–cysteine 54. A Proline amide modification is found at proline 57. A propeptide spanning residues glutamate 61–arginine 70 is cleaved from the precursor.

It belongs to the conotoxin I2 superfamily. As to expression, expressed by the venom duct.

The protein localises to the secreted. The protein is Conotoxin Lt11.2 of Conus litteratus (Lettered cone).